The chain runs to 1118 residues: Carbamoyl phosphate synthase arginine-specific large chain (1118 aa).

Positions 23–420 are carboxyphosphate synthetic domain; that stretch reads QLVEGVNSVL…AFQKALRQVD (398 aa). ATP contacts are provided by arginine 150, arginine 190, glycine 196, glycine 197, lysine 227, leucine 229, glutamate 234, glycine 260, valine 261, histidine 262, glutamine 303, and glutamate 317. Residues 154 to 346 enclose the ATP-grasp 1 domain; sequence ASALKDINIP…LAYTAAKIGL (193 aa). The Mg(2+) site is built by glutamine 303, glutamate 317, and asparagine 319. Mn(2+) contacts are provided by glutamine 303, glutamate 317, and asparagine 319. The tract at residues 421 to 573 is oligomerization domain; that stretch reads PSLLGFQGST…YTTYNATKND (153 aa). Residues 574 to 958 form a carbamoyl phosphate synthetic domain region; the sequence is VEFNENGMLV…SYWTAIQSTM (385 aa). Residues 698 to 890 form the ATP-grasp 2 domain; sequence SSILDSIDVD…FIEIAVKAFL (193 aa). Arginine 734, lysine 773, isoleucine 775, glutamate 780, glycine 805, valine 806, histidine 807, serine 808, glutamine 848, and glutamate 861 together coordinate ATP. Residues glutamine 848, glutamate 861, and asparagine 863 each coordinate Mg(2+). Mn(2+)-binding residues include glutamine 848, glutamate 861, and asparagine 863. The segment at 959 to 1102 is allosteric domain; the sequence is NFHVPLPPSG…KILESHDVIV (144 aa). In terms of domain architecture, MGS-like spans 960 to 1118; it reads FHVPLPPSGI…WDEFIGFKAY (159 aa).

This sequence belongs to the CarB family. Heterodimer composed of 2 chains; the small (or glutamine) chain promotes the hydrolysis of glutamine to ammonia, which is used by the large (or ammonia) chain to synthesize carbamoyl phosphate. The cofactor is Mg(2+). Mn(2+) serves as cofactor.

It is found in the cytoplasm. It catalyses the reaction hydrogencarbonate + L-glutamine + 2 ATP + H2O = carbamoyl phosphate + L-glutamate + 2 ADP + phosphate + 2 H(+). The enzyme catalyses hydrogencarbonate + NH4(+) + 2 ATP = carbamoyl phosphate + 2 ADP + phosphate + 2 H(+). The protein operates within amino-acid biosynthesis; L-arginine biosynthesis; carbamoyl phosphate from bicarbonate: step 1/1. Functionally, large subunit of the arginine-specific carbamoyl phosphate synthase (CPSase). CPSase catalyzes the formation of carbamoyl phosphate from the ammonia moiety of glutamine, hydrogencarbonate, and phosphate donated by ATP, constituting the first step of 2 biosynthetic pathways, one leading to arginine and/or urea and the other to pyrimidine nucleotides. The large subunit (synthetase) binds the substrates ammonia (free or transferred from glutamine from the small subunit), hydrogencarbonate and ATP and carries out an ATP-coupled ligase reaction, activating hydrogencarbonate by forming carboxy phosphate which reacts with ammonia to form carbamoyl phosphate. The sequence is that of Carbamoyl phosphate synthase arginine-specific large chain (CPA2) from Saccharomyces cerevisiae (strain ATCC 204508 / S288c) (Baker's yeast).